The primary structure comprises 1141 residues: Putative late blight resistance protein homolog R1B-13 (1141 aa).

Positions 417–437 (DSLAFLKNQIQVIQMEFEILQ) form a coiled coil. Residues 516–742 (TVITHTSSQL…LSIVLVADVL (227 aa)) form the NB-ARC domain. LRR repeat units lie at residues 826 to 851 (FKFLKVLDLEHQVVIDFIPTELPYLR), 869 to 894 (LWNLETLILKGTSAKTLLLPSTVWDM), 992 to 1016 (APNLKYLKLSGYYLDSQYLSETVDH), 1017 to 1041 (LKHLEVLKLYNVEFGDYREWEVSNG), and 1043 to 1068 (FPQLKILKLENLSLMKWIVADDAFPI).

This sequence belongs to the disease resistance NB-LRR family.

It is found in the cytoplasm. It localises to the membrane. Confers resistance to late blight (Phytophthora infestans) races carrying the avirulence gene Avr1. Resistance proteins guard the plant against pathogens that contain an appropriate avirulence protein via an indirect interaction with this avirulence protein. That triggers a defense system including the hypersensitive response, which restricts the pathogen growth. The protein is Putative late blight resistance protein homolog R1B-13 (R1B-13) of Solanum demissum (Wild potato).